Consider the following 270-residue polypeptide: 3-methyl-2-oxobutanoate hydroxymethyltransferase (270 aa).

Mg(2+) contacts are provided by aspartate 43 and aspartate 82. 3-methyl-2-oxobutanoate is bound by residues 43–44 (DS), aspartate 82, and lysine 112. Glutamate 114 lines the Mg(2+) pocket. Residue glutamate 179 is the Proton acceptor of the active site.

The protein belongs to the PanB family. As to quaternary structure, homodecamer; pentamer of dimers. Requires Mg(2+) as cofactor.

It localises to the cytoplasm. It catalyses the reaction 3-methyl-2-oxobutanoate + (6R)-5,10-methylene-5,6,7,8-tetrahydrofolate + H2O = 2-dehydropantoate + (6S)-5,6,7,8-tetrahydrofolate. It functions in the pathway cofactor biosynthesis; (R)-pantothenate biosynthesis; (R)-pantoate from 3-methyl-2-oxobutanoate: step 1/2. Its function is as follows. Catalyzes the reversible reaction in which hydroxymethyl group from 5,10-methylenetetrahydrofolate is transferred onto alpha-ketoisovalerate to form ketopantoate. The sequence is that of 3-methyl-2-oxobutanoate hydroxymethyltransferase from Staphylococcus carnosus (strain TM300).